A 142-amino-acid polypeptide reads, in one-letter code: Mitochondrial import receptor subunit TOM22 homolog (142 aa).

Low complexity predominate over residues 1-11; that stretch reads MAAAVAAAGAG. The disordered stretch occupies residues 1 to 40; the sequence is MAAAVAAAGAGEPLSPEELVPKAEAEKAEEDLEEDDDDEL. The residue at position 2 (alanine 2) is an N-acetylalanine. At 2-82 the chain is on the cytoplasmic side; sequence AAAVAAAGAG…VAQKMYRFSR (81 aa). At serine 15 the chain carries Phosphoserine. Residues 27-40 are compositionally biased toward acidic residues; sequence KAEEDLEEDDDDEL. The import sequence; necessary for mitochondrion outer membrane localization and integration in the TOM complex stretch occupies residues 41-50; sequence DETLSERLWG. Threonine 43 carries the post-translational modification Phosphothreonine. Serine 45 bears the Phosphoserine mark. Residues 83–103 form a helical membrane-spanning segment; it reads AALWIGTTSFMILVLPVVFET. Residues 83–103 form a TMD; necessary for mitochondrion outer membrane localization and integration in the TOM complex region; that stretch reads AALWIGTTSFMILVLPVVFET. Over 104 to 142 the chain is Mitochondrial intermembrane; that stretch reads EKLQMEQQQQLQQRQILLGPNTGLSGGMPGALPPLPGKI. Residues 123–142 are C-tail signal; necessary for mitochondrion outer membrane localization and integration in the TOM complex; it reads PNTGLSGGMPGALPPLPGKI.

Belongs to the Tom22 family. In terms of assembly, forms part of the preprotein translocase complex of the outer mitochondrial membrane (TOM complex) which consists of at least 7 different proteins (TOMM5, TOMM6, TOMM7, TOMM20, TOMM22, TOMM40 and TOMM70). Interacts with TOMM40. Interacts with PPP2R2B.

The protein resides in the mitochondrion outer membrane. Its function is as follows. Central receptor component of the translocase of the outer membrane of mitochondria (TOM complex) responsible for the recognition and translocation of cytosolically synthesized mitochondrial preproteins. Together with the peripheral receptor TOM20 functions as the transit peptide receptor and facilitates the movement of preproteins into the translocation pore. Required for the translocation across the mitochondrial outer membrane of cytochrome P450 monooxygenases. The protein is Mitochondrial import receptor subunit TOM22 homolog (Tomm22) of Rattus norvegicus (Rat).